The chain runs to 299 residues: Muscleblind-like protein (299 aa).

2 consecutive C3H1-type zinc fingers follow at residues Trp-38–Pro-66 and Gln-72–Gln-100.

It belongs to the muscleblind family.

It localises to the nucleus. Its function is as follows. Binds to RNA with repeat sequences CUG and CCUG. The protein is Muscleblind-like protein of Caenorhabditis briggsae.